The chain runs to 137 residues: Chaperone protein YscB (137 aa).

As to quaternary structure, interacts with SycN to form a complex which specifically binds to YopN.

It is found in the cytoplasm. It localises to the cell inner membrane. Functions as a specific chaperone for YopN. It could facilitate the secretion and the subsequent translocation of YopN. The protein is Chaperone protein YscB (yscB) of Yersinia enterocolitica serotype O:8 / biotype 1B (strain NCTC 13174 / 8081).